A 156-amino-acid polypeptide reads, in one-letter code: Small ribosomal subunit protein uS7 (156 aa).

The protein belongs to the universal ribosomal protein uS7 family. As to quaternary structure, part of the 30S ribosomal subunit. Contacts proteins S9 and S11.

In terms of biological role, one of the primary rRNA binding proteins, it binds directly to 16S rRNA where it nucleates assembly of the head domain of the 30S subunit. Is located at the subunit interface close to the decoding center, probably blocks exit of the E-site tRNA. The chain is Small ribosomal subunit protein uS7 from Ligilactobacillus salivarius (strain UCC118) (Lactobacillus salivarius).